Consider the following 144-residue polypeptide: MKGGKSKAKSDNKLAVKKQAADTKKTKKAVKDPNKPKRPPSAFFVFMEDFRKTYKEKHPNNKSVAVVGKAGGDKWKQLTAAEKAPFISKAEKRKQEYEKNLQAYNKKQAAGAAEEEESDKSRSEVNDDDEDQDGSGEDDSEDDD.

2 disordered regions span residues 1–42 (MKGG…PPSA) and 85–144 (PFIS…EDDD). 2 stretches are compositionally biased toward basic and acidic residues: residues 8-35 (AKSDNKLAVKKQAADTKKTKKAVKDPNK) and 89-99 (KAEKRKQEYEK). The segment at residues 36 to 105 (PKRPPSAFFV…EYEKNLQAYN (70 aa)) is a DNA-binding region (HMG box). Residues 126-144 (NDDDEDQDGSGEDDSEDDD) show a composition bias toward acidic residues.

This sequence belongs to the HMGB family. As to expression, expressed at higher levels in dark-grown tissues, such as roots; and at lower levels in light-grown tissues, such as cotyledons and stems.

The protein localises to the nucleus. This Ipomoea nil (Japanese morning glory) protein is HMG1/2-like protein.